Here is a 411-residue protein sequence, read N- to C-terminus: Serine hydroxymethyltransferase (411 aa).

(6S)-5,6,7,8-tetrahydrofolate-binding positions include L113 and G117 to L119. The residue at position 222 (K222) is an N6-(pyridoxal phosphate)lysine. S346–F348 lines the (6S)-5,6,7,8-tetrahydrofolate pocket.

This sequence belongs to the SHMT family. Homodimer. It depends on pyridoxal 5'-phosphate as a cofactor.

Its subcellular location is the cytoplasm. It carries out the reaction (6R)-5,10-methylene-5,6,7,8-tetrahydrofolate + glycine + H2O = (6S)-5,6,7,8-tetrahydrofolate + L-serine. It participates in one-carbon metabolism; tetrahydrofolate interconversion. It functions in the pathway amino-acid biosynthesis; glycine biosynthesis; glycine from L-serine: step 1/1. In terms of biological role, catalyzes the reversible interconversion of serine and glycine with tetrahydrofolate (THF) serving as the one-carbon carrier. This reaction serves as the major source of one-carbon groups required for the biosynthesis of purines, thymidylate, methionine, and other important biomolecules. Also exhibits THF-independent aldolase activity toward beta-hydroxyamino acids, producing glycine and aldehydes, via a retro-aldol mechanism. The protein is Serine hydroxymethyltransferase of Prochlorococcus marinus (strain NATL2A).